The primary structure comprises 298 residues: Glycine--tRNA ligase alpha subunit (298 aa).

It belongs to the class-II aminoacyl-tRNA synthetase family. As to quaternary structure, tetramer of two alpha and two beta subunits.

It localises to the cytoplasm. The catalysed reaction is tRNA(Gly) + glycine + ATP = glycyl-tRNA(Gly) + AMP + diphosphate. In Helicobacter acinonychis (strain Sheeba), this protein is Glycine--tRNA ligase alpha subunit.